The primary structure comprises 498 residues: Glycerol kinase (498 aa).

Position 11 (Thr11) interacts with ADP. Residues Thr11, Ser12, and Ser13 each contribute to the ATP site. Thr11 contributes to the sn-glycerol 3-phosphate binding site. Arg15 contributes to the ADP binding site. Positions 81, 82, 133, and 242 each coordinate sn-glycerol 3-phosphate. Positions 81, 82, 133, 242, and 243 each coordinate glycerol. 2 residues coordinate ADP: Thr264 and Gly307. ATP-binding residues include Thr264, Gly307, Gln311, and Gly408. The ADP site is built by Gly408 and Asn412.

This sequence belongs to the FGGY kinase family.

It carries out the reaction glycerol + ATP = sn-glycerol 3-phosphate + ADP + H(+). Its pathway is polyol metabolism; glycerol degradation via glycerol kinase pathway; sn-glycerol 3-phosphate from glycerol: step 1/1. Inhibited by fructose 1,6-bisphosphate (FBP). Its function is as follows. Key enzyme in the regulation of glycerol uptake and metabolism. Catalyzes the phosphorylation of glycerol to yield sn-glycerol 3-phosphate. In Ralstonia nicotianae (strain ATCC BAA-1114 / GMI1000) (Ralstonia solanacearum), this protein is Glycerol kinase.